The chain runs to 292 residues: Elongation factor Ts (292 aa).

The interval 80–83 (TDFV) is involved in Mg(2+) ion dislocation from EF-Tu.

Belongs to the EF-Ts family.

It is found in the cytoplasm. Functionally, associates with the EF-Tu.GDP complex and induces the exchange of GDP to GTP. It remains bound to the aminoacyl-tRNA.EF-Tu.GTP complex up to the GTP hydrolysis stage on the ribosome. The polypeptide is Elongation factor Ts (Oenococcus oeni (strain ATCC BAA-331 / PSU-1)).